Consider the following 311-residue polypeptide: Ribonuclease Z (311 aa).

7 residues coordinate Zn(2+): histidine 61, histidine 63, aspartate 65, histidine 66, histidine 148, aspartate 216, and histidine 275. Residue aspartate 65 is the Proton acceptor of the active site.

The protein belongs to the RNase Z family. Homodimer. Requires Zn(2+) as cofactor.

The catalysed reaction is Endonucleolytic cleavage of RNA, removing extra 3' nucleotides from tRNA precursor, generating 3' termini of tRNAs. A 3'-hydroxy group is left at the tRNA terminus and a 5'-phosphoryl group is left at the trailer molecule.. In terms of biological role, zinc phosphodiesterase, which displays some tRNA 3'-processing endonuclease activity. Probably involved in tRNA maturation, by removing a 3'-trailer from precursor tRNA. This is Ribonuclease Z from Clostridium novyi (strain NT).